A 137-amino-acid chain; its full sequence is MRNPDFSPLYRSAIGFDRLFNLLETGQTQSNGGYPPYNVELVDENQYRIAIAVAGFAEQELDITAHDNLLIVKGAHAGEQVARNYLYQGIAERNFERKFQLAEHIQVKGANLENGLLYIDLERIVPEAMKPRRIEIK.

The sHSP domain occupies Thr28–Lys137.

Belongs to the small heat shock protein (HSP20) family. As to quaternary structure, monomer. Forms homomultimers of about 100-150 subunits at optimal growth temperatures. Conformation changes to monomers at high temperatures or high ionic concentrations.

It is found in the cytoplasm. Associates with aggregated proteins, together with IbpB, to stabilize and protect them from irreversible denaturation and extensive proteolysis during heat shock and oxidative stress. Aggregated proteins bound to the IbpAB complex are more efficiently refolded and reactivated by the ATP-dependent chaperone systems ClpB and DnaK/DnaJ/GrpE. Its activity is ATP-independent. The sequence is that of Small heat shock protein IbpA from Pectobacterium atrosepticum (strain SCRI 1043 / ATCC BAA-672) (Erwinia carotovora subsp. atroseptica).